Here is a 471-residue protein sequence, read N- to C-terminus: N-succinylglutamate 5-semialdehyde dehydrogenase (471 aa).

Residue 207–212 (GSAHAG) coordinates NAD(+). Catalysis depends on residues Glu230 and Cys264.

Belongs to the aldehyde dehydrogenase family. AstD subfamily.

It carries out the reaction N-succinyl-L-glutamate 5-semialdehyde + NAD(+) + H2O = N-succinyl-L-glutamate + NADH + 2 H(+). It participates in amino-acid degradation; L-arginine degradation via AST pathway; L-glutamate and succinate from L-arginine: step 4/5. In terms of biological role, catalyzes the NAD-dependent reduction of succinylglutamate semialdehyde into succinylglutamate. This Novosphingobium aromaticivorans (strain ATCC 700278 / DSM 12444 / CCUG 56034 / CIP 105152 / NBRC 16084 / F199) protein is N-succinylglutamate 5-semialdehyde dehydrogenase.